The primary structure comprises 233 residues: Phosphatidylserine decarboxylase proenzyme (233 aa).

The Schiff-base intermediate with substrate; via pyruvic acid role is filled by Ser-190. Ser-190 is subject to Pyruvic acid (Ser); by autocatalysis.

It belongs to the phosphatidylserine decarboxylase family. PSD-A subfamily. Heterodimer of a large membrane-associated beta subunit and a small pyruvoyl-containing alpha subunit. Pyruvate serves as cofactor. Is synthesized initially as an inactive proenzyme. Formation of the active enzyme involves a self-maturation process in which the active site pyruvoyl group is generated from an internal serine residue via an autocatalytic post-translational modification. Two non-identical subunits are generated from the proenzyme in this reaction, and the pyruvate is formed at the N-terminus of the alpha chain, which is derived from the carboxyl end of the proenzyme. The post-translation cleavage follows an unusual pathway, termed non-hydrolytic serinolysis, in which the side chain hydroxyl group of the serine supplies its oxygen atom to form the C-terminus of the beta chain, while the remainder of the serine residue undergoes an oxidative deamination to produce ammonia and the pyruvoyl prosthetic group on the alpha chain.

It localises to the cell membrane. It carries out the reaction a 1,2-diacyl-sn-glycero-3-phospho-L-serine + H(+) = a 1,2-diacyl-sn-glycero-3-phosphoethanolamine + CO2. It functions in the pathway phospholipid metabolism; phosphatidylethanolamine biosynthesis; phosphatidylethanolamine from CDP-diacylglycerol: step 2/2. In terms of biological role, catalyzes the formation of phosphatidylethanolamine (PtdEtn) from phosphatidylserine (PtdSer). This chain is Phosphatidylserine decarboxylase proenzyme, found in Azorhizobium caulinodans (strain ATCC 43989 / DSM 5975 / JCM 20966 / LMG 6465 / NBRC 14845 / NCIMB 13405 / ORS 571).